We begin with the raw amino-acid sequence, 361 residues long: Porphobilinogen deaminase (361 aa).

Residue cysteine 265 is modified to S-(dipyrrolylmethanemethyl)cysteine. Residues 341 to 361 (LPPSSNTPTPQPITPITTNNS) form a disordered region.

This sequence belongs to the HMBS family. Dipyrromethane serves as cofactor.

It catalyses the reaction 4 porphobilinogen + H2O = hydroxymethylbilane + 4 NH4(+). Its pathway is porphyrin-containing compound metabolism; protoporphyrin-IX biosynthesis; coproporphyrinogen-III from 5-aminolevulinate: step 2/4. Its function is as follows. Tetrapolymerization of the monopyrrole PBG into the hydroxymethylbilane pre-uroporphyrinogen in several discrete steps. This chain is Porphobilinogen deaminase (HEM3), found in Debaryomyces hansenii (strain ATCC 36239 / CBS 767 / BCRC 21394 / JCM 1990 / NBRC 0083 / IGC 2968) (Yeast).